The sequence spans 1693 residues: Latrophilin Cirl (1693 aa).

Topologically, residues 1 to 774 are extracellular; that stretch reads MVLQGAKQRL…LFTMFDGNMR (774 aa). One can recognise an SUEL-type lectin domain in the interval 30-119; the sequence is ACEGKKLTIE…KYLEAHYQCV (90 aa). 4 N-linked (GlcNAc...) asparagine glycosylation sites follow: Asn-147, Asn-260, Asn-306, and Asn-345. A disordered region spans residues 190–309; that stretch reads PPATHATPPG…GPSVSSNGSA (120 aa). 2 stretches are compositionally biased toward polar residues: residues 259-269 and 287-309; these read SNATAPSNTRI and KSSP…NGSA. The interval 379–406 is disordered; that stretch reads SFDEDDEEMAGTSTTTPMSTSGDCLHNS. Positions 390 to 399 are enriched in low complexity; sequence TSTTTPMSTS. 4 N-linked (GlcNAc...) asparagine glycosylation sites follow: Asn-405, Asn-662, Asn-710, and Asn-737. The region spanning 568–761 is the GAIN-B domain; that stretch reads RSVVQKVKNI…AILMDVVDEH (194 aa). 2 disulfides stabilise this stretch: Cys-716-Cys-743 and Cys-731-Cys-745. Positions 716–761 are GPS; it reads CVFWNYIDHAWSANGCSLESTNRTHSVCSCNHLTNFAILMDVVDEH. The helical transmembrane segment at 775–795 threads the bilayer; the sequence is IFIYISIAICVVFIVIALLTL. At 796 to 808 the chain is on the cytoplasmic side; that stretch reads KLFNGVFVKSART. A helical membrane pass occupies residues 809–829; it reads SIYINIYICLLAIELLFLLGI. The Extracellular portion of the chain corresponds to 830–835; sequence EQTETS. Residues 836–856 traverse the membrane as a helical segment; it reads IFCGFITVFLHCAILSGTSWF. The Cytoplasmic portion of the chain corresponds to 857-882; it reads CYEAFHSYSTLTSDELLLEVDQTPKV. Residues 883-903 traverse the membrane as a helical segment; it reads NCYYLLSYGLSLSVVAISLVI. The Extracellular portion of the chain corresponds to 904-927; it reads NPSTYTQNDYCVLMEANAVFYATF. A helical transmembrane segment spans residues 928 to 948; it reads VAPVLIFFMAAIGYTFLSWII. At 949-975 the chain is on the cytoplasmic side; that stretch reads MCRKSRTGLKTKEHTRLATVRFDIRCS. A helical membrane pass occupies residues 976–996; it reads FVFFLLLSAVWCSAYFYLRGA. Residues 997-1003 are Extracellular-facing; that stretch reads KMDEDVT. A helical transmembrane segment spans residues 1004 to 1024; sequence GIYGYNFICFNTLLGLYIFVF. Residues 1025 to 1693 lie on the Cytoplasmic side of the membrane; it reads HCIQNEKIRR…VRCYLEPLAK (669 aa). Residues 1089–1109 are disordered; that stretch reads PLGTNDDAHDEQQQQQHMSAT. Phosphoserine occurs at positions 1165, 1256, and 1263. Disordered regions lie at residues 1237 to 1264, 1279 to 1362, 1450 to 1529, and 1596 to 1678; these read KPNS…LHSR, KTKP…APPP, SRYG…LPPQ, and SMRG…SAML. Residues 1307–1323 are compositionally biased toward low complexity; the sequence is QQQQQLRQQRQQQQQQL. A phosphoserine mark is found at Ser-1324 and Ser-1325. Residues 1337-1357 are compositionally biased toward low complexity; the sequence is LHLQHQQQQQQQRRAGGQQQL. Residues 1464–1475 are compositionally biased toward polar residues; sequence RNQQQQQHSLAQ. 2 stretches are compositionally biased toward acidic residues: residues 1485-1498 and 1508-1521; these read DEDD…EETT and CDEE…DMED. Residues 1640–1663 show a composition bias toward low complexity; sequence QQLQKLSPQSTTSSSSHTSHSNPH.

This sequence belongs to the G-protein coupled receptor 2 family. LN-TM7 subfamily. In terms of assembly, forms a heterodimer, consisting of a large extracellular region non-covalently linked to a seven-transmembrane moiety. In terms of processing, proteolytically cleaved into 2 subunits, an extracellular subunit and a seven-transmembrane subunit.

The protein resides in the cell membrane. This is Latrophilin Cirl from Drosophila pseudoobscura pseudoobscura (Fruit fly).